The sequence spans 464 residues: Alpha-1,6-mannosyl-glycoprotein 4-beta-N-acetylglucosaminyltransferase (464 aa).

Over 1 to 10 the chain is Cytoplasmic; the sequence is MRCSPKRSLT. The chain crosses the membrane as a helical; Signal-anchor for type II membrane protein span at residues 11-31; it reads AVIAASFLLLLLLLLLHRGSW. At 32-464 the chain is on the lumenal side; that stretch reads QDPQEVQFRD…QSIGIWTAGT (433 aa). 2 N-linked (GlcNAc...) asparagine glycosylation sites follow: Asn-70 and Asn-201.

It belongs to the glycosyltransferase 54 family. A divalent metal cation is required as a cofactor. As to expression, highly expressed in oviduct, spleen, lung and colon.

The protein resides in the golgi apparatus membrane. The catalysed reaction is N(4)-{beta-D-GlcNAc-(1-&gt;2)-[beta-D-GlcNAc-(1-&gt;4)]-alpha-D-Man-(1-&gt;3)-[beta-D-GlcNAc-(1-&gt;2)-[beta-D-GlcNAc-(1-&gt;6)]-alpha-D-Man-(1-&gt;6)]-beta-D-Man-(1-&gt;4)-beta-D-GlcNAc-(1-&gt;4)-beta-D-GlcNAc}-L-asparaginyl-[protein] + UDP-N-acetyl-alpha-D-glucosamine = N(4)-{beta-D-GlcNAc-(1-&gt;2)-[beta-D-GlcNAc-(1-&gt;4)]-alpha-D-Man-(1-&gt;3)-[beta-D-GlcNAc-(1-&gt;2)-[beta-D-GlcNAc-(1-&gt;4)]-[beta-D-GlcNAc-(1-&gt;6)]-alpha-D-Man-(1-&gt;6)]-beta-D-Man-(1-&gt;4)-beta-D-GlcNAc-(1-&gt;4)-beta-D-GlcNAc}-L-asparaginyl-[protein] + UDP + H(+). It functions in the pathway protein modification; protein glycosylation. Functionally, glycosyltransferase that catalyzes the transfer of GlcNAc to the Manalpha1-6 arm to form GlcNAcBeta1-4Manalpha1-6 linkage (also named 'GnT-VI' activity). May also participate in the transfer of N-acetylglucosamine (GlcNAc) to the core mannose residues of N-linked glycans by catalyzing the formation of the GlcNAcbeta1-4 branch on the GlcNAcbeta1-2Manalpha1-3 arm of the core structure of N-linked glycans. The sequence is that of Alpha-1,6-mannosyl-glycoprotein 4-beta-N-acetylglucosaminyltransferase (MGAT4C) from Gallus gallus (Chicken).